Consider the following 307-residue polypeptide: N-acetylmuramic acid 6-phosphate etherase (307 aa).

The SIS domain occupies 57 to 220 (IIEAFKTNGR…TTASMIGVGK (164 aa)). Glu-85 acts as the Proton donor in catalysis. Glu-116 is an active-site residue.

It belongs to the GCKR-like family. MurNAc-6-P etherase subfamily. As to quaternary structure, homodimer.

It carries out the reaction N-acetyl-D-muramate 6-phosphate + H2O = N-acetyl-D-glucosamine 6-phosphate + (R)-lactate. It participates in amino-sugar metabolism; N-acetylmuramate degradation. In terms of biological role, specifically catalyzes the cleavage of the D-lactyl ether substituent of MurNAc 6-phosphate, producing GlcNAc 6-phosphate and D-lactate. This chain is N-acetylmuramic acid 6-phosphate etherase, found in Alkaliphilus metalliredigens (strain QYMF).